The chain runs to 351 residues: Cell cycle control protein 50B (351 aa).

The Cytoplasmic segment spans residues Met1–Ser33. Residues Ile34–Tyr54 traverse the membrane as a helical segment. Residues Tyr55–Pro315 lie on the Exoplasmic loop side of the membrane. N-linked (GlcNAc...) asparagine glycans are attached at residues Asn75, Asn213, and Asn286. Residues Phe316–Leu336 form a helical membrane-spanning segment. Residues Val337–Glu351 lie on the Cytoplasmic side of the membrane.

Belongs to the CDC50/LEM3 family. In terms of assembly, component of a P4-ATPase flippase complex which consists of a catalytic alpha subunit and an accessory beta subunit. Interacts with alpha subunits ATP8A1, ATP8B1, ATP8B2 and ATP8B4.

It localises to the cell membrane. Its function is as follows. Accessory component of a P4-ATPase flippase complex which catalyzes the hydrolysis of ATP coupled to the transport of aminophospholipids from the outer to the inner leaflet of various membranes and ensures the maintenance of asymmetric distribution of phospholipids. Phospholipid translocation also seems to be implicated in vesicle formation and in uptake of lipid signaling molecules. The beta subunit may assist in binding of the phospholipid substrate. Can mediate the export of alpha subunits ATP8A1, ATP8B1, ATP8B2 and ATP8B4 from the ER to the plasma membrane. This Homo sapiens (Human) protein is Cell cycle control protein 50B (TMEM30B).